The following is a 210-amino-acid chain: MKELMRNVYLLDDTLVTKSKYGSHYGEKVFDGYREWVPWRSKLAAMILKGHRLKLRGDERVLYLGAASGTTVSHLADIVDEGIIYAVEYSAKPFEKLLELVRERNNIIPLLFDASKPWKYSGIVEKVDLIYQDIAQKNQIEILKANAEFFLKEKGEVVIMVKARSIDSTAEPEEVFKSVLKEMEGDFKIVKHGSLMPYHRDHIFIHAYRF.

Residues 70–71 (TT), 88–89 (EY), 113–114 (DA), and 133–136 (DIAQ) contribute to the S-adenosyl-L-methionine site.

It belongs to the methyltransferase superfamily. Fibrillarin family. Interacts with nop5. Component of box C/D small ribonucleoprotein (sRNP) particles that contain rpl7ae, FlpA and nop5, plus a guide RNA.

Its function is as follows. Involved in pre-rRNA and tRNA processing. Utilizes the methyl donor S-adenosyl-L-methionine to catalyze the site-specific 2'-hydroxyl methylation of ribose moieties in rRNA and tRNA. Site specificity is provided by a guide RNA that base pairs with the substrate. Methylation occurs at a characteristic distance from the sequence involved in base pairing with the guide RNA. This Archaeoglobus fulgidus (strain ATCC 49558 / DSM 4304 / JCM 9628 / NBRC 100126 / VC-16) protein is Fibrillarin-like rRNA/tRNA 2'-O-methyltransferase.